A 218-amino-acid polypeptide reads, in one-letter code: MNGAAPIIPDVRVEPDPSLVVRQLGRVAYEPTWRAMQAFAAQRSAGTADELWLLEHPPVYTLGQAGKREHLIAATDIPVVPIDRGGQITYHGPGQVVAYVLVDLRRRGYGIRELVARLEQAVIDLLAASNVEATRRAGAPGVYVDGAKIAALGLRVKHGCTYHGLAFNVDMDLEPFAAINPCGYPGMAVTQCRDLGLNWSVEQTERALTDALQRAIYS.

Residues 45–218 (AGTADELWLL…TDALQRAIYS (174 aa)) form the BPL/LPL catalytic domain. Residues 84–91 (RGGQITYH), 151–153 (ALG), and 164–166 (GLA) contribute to the substrate site. Cysteine 182 (acyl-thioester intermediate) is an active-site residue.

This sequence belongs to the LipB family.

Its subcellular location is the cytoplasm. The enzyme catalyses octanoyl-[ACP] + L-lysyl-[protein] = N(6)-octanoyl-L-lysyl-[protein] + holo-[ACP] + H(+). It participates in protein modification; protein lipoylation via endogenous pathway; protein N(6)-(lipoyl)lysine from octanoyl-[acyl-carrier-protein]: step 1/2. Functionally, catalyzes the transfer of endogenously produced octanoic acid from octanoyl-acyl-carrier-protein onto the lipoyl domains of lipoate-dependent enzymes. Lipoyl-ACP can also act as a substrate although octanoyl-ACP is likely to be the physiological substrate. The polypeptide is Octanoyltransferase (Thiobacillus denitrificans (strain ATCC 25259 / T1)).